The primary structure comprises 200 residues: Molybdenum cofactor guanylyltransferase (200 aa).

GTP-binding positions include 10–12 (LAG), Lys-23, Asn-51, Asp-69, and Asp-99. Asp-99 is a Mg(2+) binding site.

This sequence belongs to the MobA family. As to quaternary structure, monomer. Requires Mg(2+) as cofactor.

It localises to the cytoplasm. The catalysed reaction is Mo-molybdopterin + GTP + H(+) = Mo-molybdopterin guanine dinucleotide + diphosphate. Functionally, transfers a GMP moiety from GTP to Mo-molybdopterin (Mo-MPT) cofactor (Moco or molybdenum cofactor) to form Mo-molybdopterin guanine dinucleotide (Mo-MGD) cofactor. This chain is Molybdenum cofactor guanylyltransferase, found in Shewanella pealeana (strain ATCC 700345 / ANG-SQ1).